We begin with the raw amino-acid sequence, 60 residues long: Conotoxin Cal6.20 (60 aa).

An N-terminal signal peptide occupies residues 1–22; it reads MKLTCVLIVAVLILTACQVIAA. 3 disulfides stabilise this stretch: Cys32/Cys42, Cys35/Cys48, and Cys41/Cys55.

Belongs to the conotoxin O1 superfamily. Expressed by the venom duct.

Its subcellular location is the secreted. In terms of biological role, probable neurotoxin. This chain is Conotoxin Cal6.20, found in Californiconus californicus (California cone).